Consider the following 171-residue polypeptide: S-ribosylhomocysteine lyase (171 aa).

Fe cation is bound by residues histidine 54, histidine 58, and cysteine 128.

It belongs to the LuxS family. In terms of assembly, homodimer. The cofactor is Fe cation.

It carries out the reaction S-(5-deoxy-D-ribos-5-yl)-L-homocysteine = (S)-4,5-dihydroxypentane-2,3-dione + L-homocysteine. Its function is as follows. Involved in the synthesis of autoinducer 2 (AI-2) which is secreted by bacteria and is used to communicate both the cell density and the metabolic potential of the environment. The regulation of gene expression in response to changes in cell density is called quorum sensing. Catalyzes the transformation of S-ribosylhomocysteine (RHC) to homocysteine (HC) and 4,5-dihydroxy-2,3-pentadione (DPD). The sequence is that of S-ribosylhomocysteine lyase from Escherichia coli O81 (strain ED1a).